The chain runs to 206 residues: Small ribosomal subunit protein uS5 (206 aa).

Polar residues predominate over residues 1-15 (MTDTPTKQETQSNKD). The interval 1–50 (MTDTPTKQETQSNKDNVPGAIPVEQKKNNRNDRKRNRRGDSKNLERDSDW) is disordered. A compositionally biased stretch (basic and acidic residues) spans 38-50 (RGDSKNLERDSDW). An S5 DRBM domain is found at 50-113 (WQERVVQIRR…SDGKKNLVRV (64 aa)).

The protein belongs to the universal ribosomal protein uS5 family. In terms of assembly, part of the 30S ribosomal subunit. Contacts proteins S4 and S8.

In terms of biological role, with S4 and S12 plays an important role in translational accuracy. Functionally, located at the back of the 30S subunit body where it stabilizes the conformation of the head with respect to the body. The chain is Small ribosomal subunit protein uS5 from Prochlorococcus marinus (strain MIT 9215).